The chain runs to 135 residues: MLSPKRTRFRKQHRGRMKGISYRGNRICFGKFALQALEPAWITSRQIEAGRRAMTRNVRRGGKIWVRIFPDKPITARPAETRMGSGKGSPEYWVAVVKPGRILYEMGGVTEHIARRAISIAASKMPIRTQFIISR.

The protein belongs to the universal ribosomal protein uL16 family. As to quaternary structure, part of the 50S ribosomal subunit.

The protein resides in the plastid. The protein localises to the chloroplast. In Coffea arabica (Arabian coffee), this protein is Large ribosomal subunit protein uL16c.